We begin with the raw amino-acid sequence, 60 residues long: MDPCECSKTGTCNCGGSCTCKNCSCTTCNKSCCPCCPSGCPKCASGCVCKGKTCDTSCCQ.

Methionine 1 carries the N-acetylmethionine modification. Residues 1-28 (MDPCECSKTGTCNCGGSCTCKNCSCTTC) are beta. A divalent metal cation contacts are provided by cysteine 4, cysteine 6, cysteine 12, cysteine 14, cysteine 18, cysteine 20, cysteine 23, cysteine 25, cysteine 28, cysteine 32, cysteine 33, cysteine 35, cysteine 36, cysteine 40, cysteine 43, cysteine 47, cysteine 49, cysteine 54, cysteine 58, and cysteine 59. Residues 29-60 (NKSCCPCCPSGCPKCASGCVCKGKTCDTSCCQ) are alpha.

This sequence belongs to the metallothionein superfamily. Type 1 family.

Functionally, metallothioneins have a high content of cysteine residues that bind various heavy metals. This Pleuronectes platessa (European plaice) protein is Metallothionein (mt).